Consider the following 305-residue polypeptide: Phospho-N-acetylmuramoyl-pentapeptide-transferase (305 aa).

Transmembrane regions (helical) follow at residues 1-21 (MLMVAALLSWFLVGLFIRASK), 46-66 (AGGVAFVLAMALVFFPLYLSG), 73-93 (ELLIMLTALAMGVVGGVDDWL), 113-133 (FPLQFLVALVFAWLAAPLASH), 139-159 (LGPVMDVVLIALVMVGSVNAF), 174-194 (IIVLLPLLALSPVSALLVAVL), 207-227 (VFMGDMGSHAIGAVAAGAYIL), 233-253 (LLPIAAIIPVVAVLSVMIQVI), and 282-302 (VTIRFWVITAVATAAVWWLLG).

It belongs to the glycosyltransferase 4 family. MraY subfamily. Mg(2+) serves as cofactor.

The protein resides in the cell membrane. The enzyme catalyses UDP-N-acetyl-alpha-D-muramoyl-L-alanyl-gamma-D-glutamyl-meso-2,6-diaminopimeloyl-D-alanyl-D-alanine + di-trans,octa-cis-undecaprenyl phosphate = di-trans,octa-cis-undecaprenyl diphospho-N-acetyl-alpha-D-muramoyl-L-alanyl-D-glutamyl-meso-2,6-diaminopimeloyl-D-alanyl-D-alanine + UMP. It functions in the pathway cell wall biogenesis; peptidoglycan biosynthesis. Catalyzes the initial step of the lipid cycle reactions in the biosynthesis of the cell wall peptidoglycan: transfers peptidoglycan precursor phospho-MurNAc-pentapeptide from UDP-MurNAc-pentapeptide onto the lipid carrier undecaprenyl phosphate, yielding undecaprenyl-pyrophosphoryl-MurNAc-pentapeptide, known as lipid I. The protein is Phospho-N-acetylmuramoyl-pentapeptide-transferase of Deinococcus deserti (strain DSM 17065 / CIP 109153 / LMG 22923 / VCD115).